Reading from the N-terminus, the 25-residue chain is Cysteine protease inhibitor 2 (25 aa).

Belongs to the protease inhibitor I3 (leguminous Kunitz-type inhibitor) family. In terms of tissue distribution, cortex of tuber.

In terms of biological role, inhibitor of subtilisin. Inhibits moderately trypsin and chymotrypsin (serine proteases). May protect the plant by inhibiting proteases of invading organisms. This Solanum tuberosum (Potato) protein is Cysteine protease inhibitor 2.